Consider the following 426-residue polypeptide: Acetylglutamate kinase (426 aa).

Residues 1–252 (MASAKEISQY…PLESSVSITR (252 aa)) form an acetylglutamate kinase region. Residues 59-60 (AG), Arg81, and Asn170 contribute to the substrate site. The unknown stretch occupies residues 253–426 (PADLAKELFT…CATRQPTLLG (174 aa)). An N-acetyltransferase domain is found at 274 to 425 (ERVLRATSWD…HCATRQPTLL (152 aa)).

The protein in the N-terminal section; belongs to the acetylglutamate kinase family. ArgB subfamily.

The protein localises to the cytoplasm. The enzyme catalyses N-acetyl-L-glutamate + ATP = N-acetyl-L-glutamyl 5-phosphate + ADP. The protein operates within amino-acid biosynthesis; L-arginine biosynthesis; N(2)-acetyl-L-ornithine from L-glutamate: step 2/4. In Xanthomonas campestris pv. campestris (strain ATCC 33913 / DSM 3586 / NCPPB 528 / LMG 568 / P 25), this protein is Acetylglutamate kinase (argB).